The following is a 293-amino-acid chain: Elongation factor Ts (293 aa).

Residues 80–83 (TDFV) are involved in Mg(2+) ion dislocation from EF-Tu.

The protein belongs to the EF-Ts family.

It is found in the cytoplasm. Associates with the EF-Tu.GDP complex and induces the exchange of GDP to GTP. It remains bound to the aminoacyl-tRNA.EF-Tu.GTP complex up to the GTP hydrolysis stage on the ribosome. The polypeptide is Elongation factor Ts (Paraburkholderia xenovorans (strain LB400)).